Here is a 962-residue protein sequence, read N- to C-terminus: Probable transport protein MmpL9 (962 aa).

12 helical membrane-spanning segments follow: residues 25-45 (LAAI…SVAV), 201-223 (LITG…SIAT), 225-247 (LLIL…FLGY), 256-276 (FVVN…AIFL), 302-322 (ANVI…LSFA), 335-355 (AIGM…IIAI), 383-403 (WPGP…LALP), 768-788 (YDIL…MLMI), 796-816 (LVIV…SVLI), 820-840 (FVGL…LLAV), 867-887 (AMAG…FTMA), and 895-915 (RVIG…TLVV).

This sequence belongs to the resistance-nodulation-cell division (RND) (TC 2.A.6) family. MmpL subfamily.

Its subcellular location is the cell membrane. This Mycobacterium tuberculosis (strain ATCC 25618 / H37Rv) protein is Probable transport protein MmpL9 (mmpL9).